The primary structure comprises 771 residues: DNA polymerase 1 (771 aa).

Belongs to the DNA polymerase type-B family.

It catalyses the reaction DNA(n) + a 2'-deoxyribonucleoside 5'-triphosphate = DNA(n+1) + diphosphate. The chain is DNA polymerase 1 (polI) from Pyrococcus abyssi.